The following is a 368-amino-acid chain: Mitogen-activated protein kinase 7 (368 aa).

The region spanning 32–319 is the Protein kinase domain; it reads YVPIKPIGRG…VTDALLHPYM (288 aa). Residues 38-46 and Lys-61 contribute to the ATP site; that span reads IGRGAYGVV. The active-site Proton acceptor is the Asp-158. Thr-191 carries the post-translational modification Phosphothreonine. The TXY motif lies at 191–193; that stretch reads TEY. The residue at position 193 (Tyr-193) is a Phosphotyrosine. Phosphothreonine is present on Thr-196.

This sequence belongs to the protein kinase superfamily. CMGC Ser/Thr protein kinase family. MAP kinase subfamily. In terms of assembly, interacts with MKK3. The cofactor is Mg(2+). Dually phosphorylated on Thr-191 and Tyr-193, which activates the enzyme.

It carries out the reaction L-seryl-[protein] + ATP = O-phospho-L-seryl-[protein] + ADP + H(+). It catalyses the reaction L-threonyl-[protein] + ATP = O-phospho-L-threonyl-[protein] + ADP + H(+). Its activity is regulated as follows. Activated by threonine and tyrosine phosphorylation. Activated in response to hydrogen peroxide. Activation is triggered by MAPKKK17 and MAPKKK18 in a MKK3-dependent manner. In terms of biological role, MKK3-MPK7 module acts as a positive regulator of PR1 gene expression. In Arabidopsis thaliana (Mouse-ear cress), this protein is Mitogen-activated protein kinase 7 (MPK7).